The following is a 383-amino-acid chain: Acetylornithine deacetylase (383 aa).

His80 is a binding site for Zn(2+). Asp82 is an active-site residue. Asp112 contacts Zn(2+). The active site involves Glu144. Zn(2+)-binding residues include Glu145, Glu169, and His355.

It belongs to the peptidase M20A family. ArgE subfamily. Homodimer. It depends on Zn(2+) as a cofactor. Requires Co(2+) as cofactor. Glutathione serves as cofactor.

It is found in the cytoplasm. The enzyme catalyses N(2)-acetyl-L-ornithine + H2O = L-ornithine + acetate. The protein operates within amino-acid biosynthesis; L-arginine biosynthesis; L-ornithine from N(2)-acetyl-L-ornithine (linear): step 1/1. Catalyzes the hydrolysis of the amide bond of N(2)-acetylated L-amino acids. Cleaves the acetyl group from N-acetyl-L-ornithine to form L-ornithine, an intermediate in L-arginine biosynthesis pathway, and a branchpoint in the synthesis of polyamines. This chain is Acetylornithine deacetylase, found in Shigella sonnei (strain Ss046).